Consider the following 323-residue polypeptide: Transcriptional regulator protein Pur-beta-A (323 aa).

3 disordered regions span residues Met1–Ala34, Ser100–Ala122, and Gln286–Asp323. Ala2 carries the post-translational modification N-acetylalanine. Gly residues predominate over residues Glu9–Gly19. Positions Met24–Ala34 are enriched in basic and acidic residues. The DNA-binding stretch occupies residues Glu27–Tyr257. Residues Gln286–Ser305 show a composition bias toward basic and acidic residues. Over residues Asp313–Asp323 the composition is skewed to acidic residues.

Belongs to the PUR DNA-binding protein family.

The protein resides in the nucleus. Functionally, transcriptional regulator which can act as an activator or a repressor. In Xenopus laevis (African clawed frog), this protein is Transcriptional regulator protein Pur-beta-A (purb-a).